The following is a 278-amino-acid chain: uncharacterized protein (278 aa).

The protein resides in the cytoplasm. Its subcellular location is the nucleus. Its function is as follows. Probable methyltransferase. This is an uncharacterized protein from Schizosaccharomyces pombe (strain 972 / ATCC 24843) (Fission yeast).